A 129-amino-acid polypeptide reads, in one-letter code: MARPRRSGKKKEKKNVPVGIAHVKATFNNTIITFTDLKGNVISWATSGASGFKGSRKSTPFAAQVAAETAARKAQDQGMRTVGIFVKGPGSGREAAMRAIGNVGMKVNFIRDITPIPHNGCRPPKRRRV.

This sequence belongs to the universal ribosomal protein uS11 family. Part of the 30S ribosomal subunit. Interacts with proteins S7 and S18. Binds to IF-3.

Located on the platform of the 30S subunit, it bridges several disparate RNA helices of the 16S rRNA. Forms part of the Shine-Dalgarno cleft in the 70S ribosome. The sequence is that of Small ribosomal subunit protein uS11 from Maridesulfovibrio salexigens (strain ATCC 14822 / DSM 2638 / NCIMB 8403 / VKM B-1763) (Desulfovibrio salexigens).